A 458-amino-acid polypeptide reads, in one-letter code: Bifunctional protein GlmU (458 aa).

Residues 1 to 230 (MENRYAIILA…FDEAMGVNDR (230 aa)) form a pyrophosphorylase region. UDP-N-acetyl-alpha-D-glucosamine contacts are provided by residues 9-12 (LAAG), lysine 23, glutamine 73, and 78-79 (GT). Residue aspartate 103 coordinates Mg(2+). UDP-N-acetyl-alpha-D-glucosamine contacts are provided by glycine 140, glutamate 155, asparagine 170, and asparagine 228. Mg(2+) is bound at residue asparagine 228. The segment at 231–251 (VALSTANKIMHRRLNEMHMRN) is linker. The tract at residues 252–458 (GVTFIDPDTT…YAKKLPYMKD (207 aa)) is N-acetyltransferase. UDP-N-acetyl-alpha-D-glucosamine contacts are provided by arginine 333 and lysine 351. The Proton acceptor role is filled by histidine 363. Residues tyrosine 366 and asparagine 377 each coordinate UDP-N-acetyl-alpha-D-glucosamine. Acetyl-CoA-binding positions include 386 to 387 (NY), serine 405, alanine 423, and arginine 440.

This sequence in the N-terminal section; belongs to the N-acetylglucosamine-1-phosphate uridyltransferase family. In the C-terminal section; belongs to the transferase hexapeptide repeat family. Homotrimer. The cofactor is Mg(2+).

The protein resides in the cytoplasm. The enzyme catalyses alpha-D-glucosamine 1-phosphate + acetyl-CoA = N-acetyl-alpha-D-glucosamine 1-phosphate + CoA + H(+). It carries out the reaction N-acetyl-alpha-D-glucosamine 1-phosphate + UTP + H(+) = UDP-N-acetyl-alpha-D-glucosamine + diphosphate. It participates in nucleotide-sugar biosynthesis; UDP-N-acetyl-alpha-D-glucosamine biosynthesis; N-acetyl-alpha-D-glucosamine 1-phosphate from alpha-D-glucosamine 6-phosphate (route II): step 2/2. The protein operates within nucleotide-sugar biosynthesis; UDP-N-acetyl-alpha-D-glucosamine biosynthesis; UDP-N-acetyl-alpha-D-glucosamine from N-acetyl-alpha-D-glucosamine 1-phosphate: step 1/1. It functions in the pathway bacterial outer membrane biogenesis; LPS lipid A biosynthesis. In terms of biological role, catalyzes the last two sequential reactions in the de novo biosynthetic pathway for UDP-N-acetylglucosamine (UDP-GlcNAc). The C-terminal domain catalyzes the transfer of acetyl group from acetyl coenzyme A to glucosamine-1-phosphate (GlcN-1-P) to produce N-acetylglucosamine-1-phosphate (GlcNAc-1-P), which is converted into UDP-GlcNAc by the transfer of uridine 5-monophosphate (from uridine 5-triphosphate), a reaction catalyzed by the N-terminal domain. The protein is Bifunctional protein GlmU of Enterococcus faecalis (strain ATCC 700802 / V583).